A 697-amino-acid polypeptide reads, in one-letter code: SPX domain-containing membrane protein OsI_08463 (697 aa).

Positions 2–145 (VNFGKRLMAD…GYKFTDYYVS (144 aa)) constitute an SPX domain. 11 helical membrane-spanning segments follow: residues 247–267 (FMSL…TYII), 278–298 (LGAA…AQVF), 315–335 (LVFS…AYDV), 338–356 (LTVL…ARAV), 375–395 (AGFV…AGLL), 411–431 (LPGW…WISF), 513–533 (LLIY…SSVV), 544–564 (TVAM…VIVG), 576–596 (ILVA…RFTS), 604–624 (VSSA…NLSL), and 670–690 (LLNV…VATF).

Belongs to the major facilitator superfamily.

The protein localises to the membrane. This is SPX domain-containing membrane protein OsI_08463 from Oryza sativa subsp. indica (Rice).